Reading from the N-terminus, the 323-residue chain is Olfactory receptor 51S1 (323 aa).

At 1–33 (MSTLPTQIAPNSSTSMAPTFLLVGMPGLSGAPS) the chain is on the extracellular side. Asparagine 11 carries N-linked (GlcNAc...) asparagine glycosylation. Residues 34 to 54 (WWTLPLIAVYLLSALGNGTIL) traverse the membrane as a helical segment. The Cytoplasmic portion of the chain corresponds to 55 to 62 (WIIALQPA). The helical transmembrane segment at 63 to 83 (LHRPMHFFLFLLSVSDIGLVT) threads the bilayer. Over 84–107 (ALMPTLLGIALAGAHTVPASACLL) the chain is Extracellular. Cysteine 105 and cysteine 197 are joined by a disulfide. Residues 108 to 128 (QMVFIHVFSVMESSVLLAMSI) traverse the membrane as a helical segment. Topologically, residues 129 to 147 (DRALAICRPLHYPALLTNG) are cytoplasmic. A helical membrane pass occupies residues 148-168 (VISKISLAISFRCLGLHLPLP). Topologically, residues 169 to 203 (FLLAYMPYCLPQVLTHSYCLHPDVARLACPEAWGA) are extracellular. A helical membrane pass occupies residues 204–224 (AYSLFVVLSAMGLDPLLIFFS). Residues 225–244 (YGLIGKVLQGVESREDRWKA) are Cytoplasmic-facing. Residues 245 to 265 (GQTCAAHLSAVLLFYIPMILL) traverse the membrane as a helical segment. Residues 266–280 (ALINHPELPITQHTH) are Extracellular-facing. A helical membrane pass occupies residues 281–301 (TLLSYVHFLLPPLINPILYSV). Over 302 to 323 (KMKEIRKRILNRLQPRKVGGAQ) the chain is Cytoplasmic.

The protein belongs to the G-protein coupled receptor 1 family.

It localises to the cell membrane. In terms of biological role, odorant receptor. The polypeptide is Olfactory receptor 51S1 (OR51S1) (Homo sapiens (Human)).